The following is a 247-amino-acid chain: 3-oxoacyl-[acyl-carrier-protein] reductase MabA (247 aa).

NADP(+)-binding positions include 25–27 (RGI), Arg-47, 61–62 (DV), Gly-90, Tyr-153, Lys-157, Ile-186, and Arg-197. The active-site Proton acceptor is Tyr-153.

The protein belongs to the short-chain dehydrogenases/reductases (SDR) family. As to quaternary structure, homotetramer.

It is found in the secreted. The protein resides in the cell wall. It catalyses the reaction a (3R)-hydroxyacyl-[ACP] + NADP(+) = a 3-oxoacyl-[ACP] + NADPH + H(+). The protein operates within lipid metabolism; mycolic acid biosynthesis. Its function is as follows. Part of the mycobacterial fatty acid elongation system FAS-II, which is involved in mycolic acid biosynthesis. Catalyzes the NADPH-dependent reduction of beta-ketoacyl derivatives, the second step of the FAS-II elongation cycle. This chain is 3-oxoacyl-[acyl-carrier-protein] reductase MabA, found in Mycobacterium bovis (strain ATCC BAA-935 / AF2122/97).